The chain runs to 189 residues: Putative manganese efflux pump MntP (189 aa).

The next 6 membrane-spanning stretches (helical) occupy residues 3–23 (LSAT…ASIG), 41–61 (LIFG…GLFA), 65–85 (IMEW…MRMI), 103–123 (GFWL…AIGV), 132–152 (IVHT…LGMM), and 167–187 (ILGG…HLGY).

It belongs to the MntP (TC 9.B.29) family.

It localises to the cell inner membrane. Functionally, probably functions as a manganese efflux pump. The polypeptide is Putative manganese efflux pump MntP (Serratia proteamaculans (strain 568)).